The sequence spans 360 residues: Photosystem II protein D1 2 (360 aa).

Residues 1 to 31 (MTTTLQQRESASLWEQFCQWVTSTNNRIYVG) lie on the Cytoplasmic side of the membrane. The helical transmembrane segment at 32 to 53 (WFGTLMIPTLLTATTCFIIAFI) threads the bilayer. At 54 to 110 (AAPPVDIDGIREPVAGSLLYGNNIISGAVVPSSNAIGLHFYPIWEAASLDEWLYNGG) the chain is on the lumenal, thylakoid side. Residues 111–134 (PYQLVVFHFLIGIFCYMGRQWELS) form a helical membrane-spanning segment. Histidine 118 contributes to the chlorophyll a binding site. Tyrosine 126 contacts pheophytin a. Topologically, residues 135–142 (YRLGMRPW) are cytoplasmic. A helical membrane pass occupies residues 143–161 (ICVAYSAPVSAATAVFLIY). Tyrosine 147 is a pheophytin a binding site. The Lumenal, thylakoid segment spans residues 162 to 191 (PIGQGSFSDGMPLGISGTFNFMIVFQAEHN). The [CaMn4O5] cluster site is built by aspartate 170 and glutamate 189. A helical transmembrane segment spans residues 192–218 (ILMHPFHMLGVAGVFGGSLFSAMHGSL). Residue histidine 198 coordinates chlorophyll a. Positions 215, 264, and 265 each coordinate a quinone. Histidine 215 is a binding site for Fe cation. At 219–270 (VTSSLVRETTEVESQNYGYKFGQEEETYNIVAAHGYFGRLIFQYASFNNSRS) the chain is on the cytoplasmic side. The helical transmembrane segment at 271–295 (LHFFLGAWPVIGIWFTAMGVSTMAF) threads the bilayer. Histidine 272 contacts Fe cation. The Lumenal, thylakoid portion of the chain corresponds to 296-360 (NLNGFNFNQS…VALTAPAVNG (65 aa)). [CaMn4O5] cluster-binding residues include histidine 332, glutamate 333, histidine 337, aspartate 342, and alanine 344. Residues 345–360 (SGEQAPVALTAPAVNG) constitute a propeptide that is removed on maturation.

This sequence belongs to the reaction center PufL/M/PsbA/D family. PSII is composed of 1 copy each of membrane proteins PsbA, PsbB, PsbC, PsbD, PsbE, PsbF, PsbH, PsbI, PsbJ, PsbK, PsbL, PsbM, PsbT, PsbX, PsbY, PsbZ, Psb30/Ycf12, peripheral proteins PsbO, CyanoQ (PsbQ), PsbU, PsbV and a large number of cofactors. It forms dimeric complexes. The D1/D2 heterodimer binds P680, chlorophylls that are the primary electron donor of PSII, and subsequent electron acceptors. It shares a non-heme iron and each subunit binds pheophytin, quinone, additional chlorophylls, carotenoids and lipids. D1 provides most of the ligands for the Mn4-Ca-O5 cluster of the oxygen-evolving complex (OEC). There is also a Cl(-1) ion associated with D1 and D2, which is required for oxygen evolution. The PSII complex binds additional chlorophylls, carotenoids and specific lipids. serves as cofactor. In terms of processing, C-terminally processed by CtpA; processing is essential to allow assembly of the oxygen-evolving complex and photosynthetic growth. Post-translationally, tyr-161 forms a radical intermediate that is referred to as redox-active TyrZ, YZ or Y-Z.

Its subcellular location is the cellular thylakoid membrane. The enzyme catalyses 2 a plastoquinone + 4 hnu + 2 H2O = 2 a plastoquinol + O2. Its function is as follows. Photosystem II (PSII) is a light-driven water:plastoquinone oxidoreductase that uses light energy to abstract electrons from H(2)O, generating O(2) and a proton gradient subsequently used for ATP formation. It consists of a core antenna complex that captures photons, and an electron transfer chain that converts photonic excitation into a charge separation. The D1/D2 (PsbA/PsbD) reaction center heterodimer binds P680, the primary electron donor of PSII as well as several subsequent electron acceptors. The sequence is that of Photosystem II protein D1 2 from Synechocystis sp. (strain ATCC 27184 / PCC 6803 / Kazusa).